The sequence spans 295 residues: 33 kDa chaperonin (295 aa).

Intrachain disulfides connect cysteine 237–cysteine 239 and cysteine 270–cysteine 273.

This sequence belongs to the HSP33 family. Under oxidizing conditions two disulfide bonds are formed involving the reactive cysteines. Under reducing conditions zinc is bound to the reactive cysteines and the protein is inactive.

The protein resides in the cytoplasm. Its function is as follows. Redox regulated molecular chaperone. Protects both thermally unfolding and oxidatively damaged proteins from irreversible aggregation. Plays an important role in the bacterial defense system toward oxidative stress. The protein is 33 kDa chaperonin of Symbiobacterium thermophilum (strain DSM 24528 / JCM 14929 / IAM 14863 / T).